The chain runs to 358 residues: Ribosomal RNA large subunit methyltransferase M (358 aa).

S-adenosyl-L-methionine-binding positions include Ser191, 224 to 227 (APGG), Asp243, Asp263, and Asp279. Residue Lys308 is the Proton acceptor of the active site.

The protein belongs to the class I-like SAM-binding methyltransferase superfamily. RNA methyltransferase RlmE family. RlmM subfamily. As to quaternary structure, monomer.

It localises to the cytoplasm. The enzyme catalyses cytidine(2498) in 23S rRNA + S-adenosyl-L-methionine = 2'-O-methylcytidine(2498) in 23S rRNA + S-adenosyl-L-homocysteine + H(+). In terms of biological role, catalyzes the 2'-O-methylation at nucleotide C2498 in 23S rRNA. This chain is Ribosomal RNA large subunit methyltransferase M, found in Marinobacter nauticus (strain ATCC 700491 / DSM 11845 / VT8) (Marinobacter aquaeolei).